Here is a 749-residue protein sequence, read N- to C-terminus: Phototropin (749 aa).

In terms of domain architecture, PAS 1 spans 7–80 (PASQLTKVLA…QKIRDAIKKG (74 aa)). Residues 56–61 (NCRFLQ), R74, N89, N99, and Q120 contribute to the FMN site. C57 is subject to S-4a-FMN cysteine. The PAC 1 domain occupies 81–135 (EACSVRLLNYRKDGTPFWNLLTVTPIKTPDGRVSKFVGVQVDVTSKTEGKALADN). The PAS 2 domain occupies 200–273 (VALDLATTVE…DQIRAAIKEG (74 aa)). The PAC 2 domain occupies 274–328 (SELTVRILNYTKAGKAFWNMFTLAPMRDQDGHARFFVGVQVDVTAQSTSPDKAPV). The region spanning 404–712 (FRRVKQLGAG…ANEIKSHPWF (309 aa)) is the Protein kinase domain. ATP contacts are provided by residues 410–418 (LGAGDVGLV) and K433. Residue D529 is the Proton acceptor of the active site. 2 disordered regions span residues 563-591 (KIGG…SSSG) and 729-749 (PRRA…FDNY). One can recognise an AGC-kinase C-terminal domain in the interval 713-749 (KGINWALLRHQQPPYVPRRASKAAGGSSTGGAAFDNY). A compositionally biased stretch (low complexity) spans 734 to 749 (KAAGGSSTGGAAFDNY).

The protein belongs to the protein kinase superfamily. AGC Ser/Thr protein kinase family. FMN is required as a cofactor. Autophosphorylated in response to blue light irradiation. In terms of processing, 2 molecules of FMN bind covalently to cysteines after exposure to blue light and are reversed in the dark. As to expression, expressed in gametes, pre-gametes and gametes generated by pre-gametes (at protein level).

The protein localises to the membrane. The catalysed reaction is L-seryl-[protein] + ATP = O-phospho-L-seryl-[protein] + ADP + H(+). It carries out the reaction L-threonyl-[protein] + ATP = O-phospho-L-threonyl-[protein] + ADP + H(+). Functionally, protein kinase that acts as a blue light photoreceptor. Required for non-photochemical quenching (NPQ), a mechanism that converts and dissipates the harmful excess absorbed light energy into heat and protect the photosynthetic apparatus from photo-oxidative damage. Controls the energy-dependent chlorophyll fluorescence quenching (qE) activity of chlorophyll excited states by inducing the expression of the qE effector protein LHCSR3 in high light intensities. The chain is Phototropin from Chlamydomonas reinhardtii (Chlamydomonas smithii).